The primary structure comprises 757 residues: Xaa-Pro dipeptidyl-peptidase (757 aa).

Catalysis depends on charge relay system residues S348, D468, and H498.

Belongs to the peptidase S15 family. Homodimer.

The protein resides in the cytoplasm. The catalysed reaction is Hydrolyzes Xaa-Pro-|- bonds to release unblocked, N-terminal dipeptides from substrates including Ala-Pro-|-p-nitroanilide and (sequentially) Tyr-Pro-|-Phe-Pro-|-Gly-Pro-|-Ile.. Its function is as follows. Removes N-terminal dipeptides sequentially from polypeptides having unsubstituted N-termini provided that the penultimate residue is proline. This is Xaa-Pro dipeptidyl-peptidase from Streptococcus pneumoniae (strain P1031).